The chain runs to 700 residues: MRLGVCYFPEHWPSEEWERDVAAMADAGLEYVRMAEFSWGVLEPERGTFDFEWLDEAIELIGDHGMQAVLCTPTATPPKWLVDERPSIRQEDPDGTVREHGSRRHYCFNSDAYREETARIVERVTERYADSPHVAGWQTDNEFGCHETVRCYCDDCADAFRTWLADRYGDIDRLNEAWGNAFWSQQYGSFDEIDPPGPTPAEHHPSRLLAYARFSSDSVVEYNRLHADLIREADPDWFVTHNFMGRFPTLNAYDVSEDLDRVAWDSYPTGFVQDRYDGEASPDQLRAGDPDQVGMDHDIYRSALDRPFWVMEQQPGDVNWPPHCPQPGEGAMRLWAHHAAAHGADAVLYFRWRRCLEGQEQYHAGLRKADGSPDRGYADAAHTSEEFATLDGASHVDAPVAVVFDYDSLWALNAQPHAPDFDYWALQEAFYGAVRGRGVQVDVVPPSADLSGYAAVVAPALHLVTEDLADRLTDYIAGGGEVLFGPRTGVKDAENKLRPMSQPGPLTDLVGATVDQHESLPRRLETTVRRVGDPTDDSEEIAAPPVSFRTWAEWLDPDAAEPQYAYDVDGPADGRPAVVTNTVGDGQVTYCGVWPESDLADALASDLLDRAGVRYAERLPDGVRIGYRGGRTWVTNFTSDRLRLPEIDPESLAVDDTDRDGFDPMADDDKDSSADGIVVGPYGVAVIEGDCVDGLRIAQT.

R103 contributes to the substrate binding site. A Zn(2+)-binding site is contributed by C107. N141 is a binding site for substrate. Residue E142 is the Proton donor of the active site. Residues C151, C153, and C156 each contribute to the Zn(2+) site. E312 functions as the Nucleophile in the catalytic mechanism. Residues W320 and 360-363 contribute to the substrate site; that span reads EQYH. Residues 648 to 658 show a composition bias toward acidic residues; sequence DPESLAVDDTD. The segment at 648–674 is disordered; the sequence is DPESLAVDDTDRDGFDPMADDDKDSSA.

The protein belongs to the glycosyl hydrolase 42 family.

It carries out the reaction Hydrolysis of terminal non-reducing beta-D-galactose residues in beta-D-galactosides.. Requires 4 M NaCl or KCl for maximal activity. Cleaves o-nitrophenyl-beta-D-galactopyranoside (ONPG) in vitro. The protein is Beta-galactosidase Bga of Halorubrum lacusprofundi (strain ATCC 49239 / DSM 5036 / JCM 8891 / ACAM 34).